The primary structure comprises 654 residues: Protein fem-1 homolog A-like (654 aa).

ANK repeat units lie at residues 2 to 31 (DLHT…REEL), 40 to 70 (GGGT…SVEA), 82 to 111 (EGAP…SVNR), 115 to 145 (TNST…DLEV), 149 to 178 (HGHT…QVNR), 182 to 211 (KGNT…RMER), and 214 to 243 (YGMT…SHEQ). Ser108 is subject to Phosphoserine. Positions 241–265 (HEQLSGTELPGEGSSQMAGNHCSTP) are disordered. The span at 253–263 (GSSQMAGNHCS) shows a compositional bias: polar residues. TPR repeat units lie at residues 283–317 (VEAL…RHQG) and 375–408 (SYYI…QQNN). 2 ANK repeats span residues 519-561 (NGFT…DPDS) and 565-594 (DNNS…HMDA). A Phosphoserine modification is found at Ser608.

It belongs to the fem-1 family. As to quaternary structure, component of a CRL2 E3 ubiquitin-protein ligase complex, also named ECS (Elongin BC-CUL2/5-SOCS-box protein) complex, composed of CUL2, Elongin BC (ELOB and ELOC), RBX1 and substrate-specific adapter FEM1A.

The protein resides in the mitochondrion. The protein localises to the cytoplasm. The protein operates within protein modification; protein ubiquitination. Substrate-recognition component of a Cul2-RING (CRL2) E3 ubiquitin-protein ligase complex of the DesCEND (destruction via C-end degrons) pathway, which recognizes a C-degron located at the extreme C terminus of target proteins, leading to their ubiquitination and degradation. The C-degron recognized by the DesCEND pathway is usually a motif of less than ten residues and can be present in full-length proteins, truncated proteins or proteolytically cleaved forms. The CRL2(FEM1A) complex specifically recognizes proteins with an arginine at the C-terminus: recognizes and binds proteins ending with -Lys/Arg-Xaa-Arg and -Lys/Arg-Xaa-Xaa-Arg C-degrons, such as SIL1 or OR51B2, leading to their ubiquitination and degradation. The polypeptide is Protein fem-1 homolog A-like (Mus musculus (Mouse)).